A 205-amino-acid polypeptide reads, in one-letter code: GTP cyclohydrolase-2 (205 aa).

49 to 53 (RLHSE) provides a ligand contact to GTP. Residues cysteine 54, cysteine 65, and cysteine 67 each contribute to the Zn(2+) site. GTP-binding positions include glutamine 70, 92–94 (EGR), and threonine 114. Aspartate 126 serves as the catalytic Proton acceptor. The active-site Nucleophile is arginine 128. Residues threonine 149 and lysine 154 each coordinate GTP.

This sequence belongs to the GTP cyclohydrolase II family. Zn(2+) is required as a cofactor.

It carries out the reaction GTP + 4 H2O = 2,5-diamino-6-hydroxy-4-(5-phosphoribosylamino)-pyrimidine + formate + 2 phosphate + 3 H(+). Its pathway is cofactor biosynthesis; riboflavin biosynthesis; 5-amino-6-(D-ribitylamino)uracil from GTP: step 1/4. Functionally, catalyzes the conversion of GTP to 2,5-diamino-6-ribosylamino-4(3H)-pyrimidinone 5'-phosphate (DARP), formate and pyrophosphate. The sequence is that of GTP cyclohydrolase-2 from Pseudomonas paraeruginosa (strain DSM 24068 / PA7) (Pseudomonas aeruginosa (strain PA7)).